The primary structure comprises 293 residues: Formamidopyrimidine-DNA glycosylase (293 aa).

Catalysis depends on Pro2, which acts as the Schiff-base intermediate with DNA. Glu3 acts as the Proton donor in catalysis. Lys60 functions as the Proton donor; for beta-elimination activity in the catalytic mechanism. DNA-binding residues include His110, Arg129, and Arg174. An FPG-type zinc finger spans residues 259 to 293 (NVYRRTGKECRKCGNLIEKQKIAGRSTHWCPNCQK). The active-site Proton donor; for delta-elimination activity is the Arg283.

It belongs to the FPG family. In terms of assembly, monomer. Requires Zn(2+) as cofactor.

The catalysed reaction is Hydrolysis of DNA containing ring-opened 7-methylguanine residues, releasing 2,6-diamino-4-hydroxy-5-(N-methyl)formamidopyrimidine.. It catalyses the reaction 2'-deoxyribonucleotide-(2'-deoxyribose 5'-phosphate)-2'-deoxyribonucleotide-DNA = a 3'-end 2'-deoxyribonucleotide-(2,3-dehydro-2,3-deoxyribose 5'-phosphate)-DNA + a 5'-end 5'-phospho-2'-deoxyribonucleoside-DNA + H(+). Functionally, involved in base excision repair of DNA damaged by oxidation or by mutagenic agents. Acts as a DNA glycosylase that recognizes and removes damaged bases. Has a preference for oxidized purines, such as 7,8-dihydro-8-oxoguanine (8-oxoG). Has AP (apurinic/apyrimidinic) lyase activity and introduces nicks in the DNA strand. Cleaves the DNA backbone by beta-delta elimination to generate a single-strand break at the site of the removed base with both 3'- and 5'-phosphates. The polypeptide is Formamidopyrimidine-DNA glycosylase (Prochlorococcus marinus (strain MIT 9312)).